The primary structure comprises 103 residues: Large ribosomal subunit protein bL21 (103 aa).

It belongs to the bacterial ribosomal protein bL21 family. In terms of assembly, part of the 50S ribosomal subunit. Contacts protein L20.

In terms of biological role, this protein binds to 23S rRNA in the presence of protein L20. This chain is Large ribosomal subunit protein bL21, found in Thiobacillus denitrificans (strain ATCC 25259 / T1).